Consider the following 521-residue polypeptide: MSSDSDRQCPVDGDIDQQEMIPSKKNAVLVDGVVLNGPTTDAKAGEKFVEEACRLIMEEVVLKATDVNEKVCEWRPPEQLKQLLDLEMRDSGEPPHKLLELCRDVIHYSVKTNHPRFFNQLYAGLDYYSLVARFMTEALNPSVYTYEVSPVFLLVEEAVLKKMIEFIGWKEGDGIFNPGGSVSNMYAMNLARYKYCPDIKEKGLSGSPRLILFTSAECHYSMKKAASFLGIGTENVCFVETDGRGKMIPEELEKQVWQARKEGAAPFLVCATSGTTVLGAFDPLDEIADICERHSLWLHVDASWGGSALMSRKHRKLLHGIHRADSVAWNPHKMLMAGIQCCALLVKDKSDLLKKCYSAKASYLFQQDKFYDVSYDTGDKSIQCSRRPDAFKFWMTWKALGTLGLEERVNRALALSRYLVDEIKKREGFKLLMEPEYANICFWYIPPSLREMEEGPEFWAKLNLVAPAIKERMMKKGSLMLGYQPHRGKVNFFRQVVISPQVSREDMDFLLDEIDLLGKDM.

N6-(pyridoxal phosphate)lysine is present on K333.

Belongs to the group II decarboxylase family. Homodimer. Requires pyridoxal 5'-phosphate as cofactor. Expressed very weakly in neurons and not detected in astrocytes, brain or liver.

The enzyme catalyses L-aspartate + H(+) = beta-alanine + CO2. The catalysed reaction is 3-sulfino-L-alanine + H(+) = hypotaurine + CO2. It catalyses the reaction L-cysteate + H(+) = taurine + CO2. In terms of biological role, may catalyze the decarboxylation of L-aspartate, 3-sulfino-L-alanine (cysteine sulfinic acid), and L-cysteate to beta-alanine, hypotaurine and taurine, respectively. Does not exhibit any decarboxylation activity toward glutamate. The chain is Acidic amino acid decarboxylase GADL1 (GADL1) from Homo sapiens (Human).